The following is a 512-amino-acid chain: ATP synthase subunit alpha 2 (512 aa).

169–176 is an ATP binding site; sequence GDRQTGKT.

This sequence belongs to the ATPase alpha/beta chains family. F-type ATPases have 2 components, CF(1) - the catalytic core - and CF(0) - the membrane proton channel. CF(1) has five subunits: alpha(3), beta(3), gamma(1), delta(1), epsilon(1). CF(0) has four main subunits: a(1), b(1), b'(1) and c(9-12).

The protein resides in the cell inner membrane. It catalyses the reaction ATP + H2O + 4 H(+)(in) = ADP + phosphate + 5 H(+)(out). Its function is as follows. Produces ATP from ADP in the presence of a proton gradient across the membrane. The alpha chain is a regulatory subunit. The sequence is that of ATP synthase subunit alpha 2 from Dinoroseobacter shibae (strain DSM 16493 / NCIMB 14021 / DFL 12).